Here is a 255-residue protein sequence, read N- to C-terminus: 4-diphosphocytidyl-2-C-methyl-D-erythritol kinase (255 aa).

Lysine 6 is a catalytic residue. Residue 95-105 (PVCAGLGGGSS) participates in ATP binding. Aspartate 137 is a catalytic residue.

This sequence belongs to the GHMP kinase family. IspE subfamily.

The catalysed reaction is 4-CDP-2-C-methyl-D-erythritol + ATP = 4-CDP-2-C-methyl-D-erythritol 2-phosphate + ADP + H(+). Its pathway is isoprenoid biosynthesis; isopentenyl diphosphate biosynthesis via DXP pathway; isopentenyl diphosphate from 1-deoxy-D-xylulose 5-phosphate: step 3/6. In terms of biological role, catalyzes the phosphorylation of the position 2 hydroxy group of 4-diphosphocytidyl-2C-methyl-D-erythritol. The sequence is that of 4-diphosphocytidyl-2-C-methyl-D-erythritol kinase from Campylobacter jejuni subsp. jejuni serotype O:2 (strain ATCC 700819 / NCTC 11168).